The primary structure comprises 128 residues: Cyclin-dependent protein kinase inhibitor SMR1 (128 aa).

The interval 17 to 74 (PIKIRSKTSKTKKDEGDDDEDDLRCSTPTSQEHKIPAVVDSPPPPPRKPRPPPSAPSA) is disordered. Over residues 57–71 (SPPPPPRKPRPPPSA) the composition is skewed to pro residues.

In terms of assembly, interacts with CDKB1-1. Interacts with CPR5. In terms of tissue distribution, expressed in roots, leaves, stems, siliques and flowers. Expressed in the root elongation zone.

Its subcellular location is the nucleus. Functionally, probable cyclin-dependent protein kinase (CDK) inhibitor that functions as a repressor of mitosis in the endoreduplication cell cycle. Cooperates with SIM and SMR2 to promote endoreplication during leaf development. Specifically regulates endoreduplication in epidermal pavement cells to produce the cell size pattern. Is necessary for giant cell formation. Positive regulator of effector-triggered immunity (ETI). The sequence is that of Cyclin-dependent protein kinase inhibitor SMR1 from Arabidopsis thaliana (Mouse-ear cress).